A 952-amino-acid polypeptide reads, in one-letter code: Valine--tRNA ligase (952 aa).

The 'HIGH' region motif lies at 42–52 (PNVTGSLHMGH). Residues 554–558 (KMSKS) carry the 'KMSKS' region motif. K557 lines the ATP pocket. The stretch at 888-952 (AELARLDGEI…EEQKKTIAAL (65 aa)) forms a coiled coil.

This sequence belongs to the class-I aminoacyl-tRNA synthetase family. ValS type 1 subfamily. Monomer.

It is found in the cytoplasm. It carries out the reaction tRNA(Val) + L-valine + ATP = L-valyl-tRNA(Val) + AMP + diphosphate. Functionally, catalyzes the attachment of valine to tRNA(Val). As ValRS can inadvertently accommodate and process structurally similar amino acids such as threonine, to avoid such errors, it has a 'posttransfer' editing activity that hydrolyzes mischarged Thr-tRNA(Val) in a tRNA-dependent manner. This Vibrio parahaemolyticus serotype O3:K6 (strain RIMD 2210633) protein is Valine--tRNA ligase.